Reading from the N-terminus, the 361-residue chain is Histidinol-phosphate aminotransferase (361 aa).

Lys-219 carries the N6-(pyridoxal phosphate)lysine modification.

This sequence belongs to the class-II pyridoxal-phosphate-dependent aminotransferase family. Histidinol-phosphate aminotransferase subfamily. In terms of assembly, homodimer. Requires pyridoxal 5'-phosphate as cofactor.

The enzyme catalyses L-histidinol phosphate + 2-oxoglutarate = 3-(imidazol-4-yl)-2-oxopropyl phosphate + L-glutamate. Its pathway is amino-acid biosynthesis; L-histidine biosynthesis; L-histidine from 5-phospho-alpha-D-ribose 1-diphosphate: step 7/9. The sequence is that of Histidinol-phosphate aminotransferase from Acinetobacter baumannii (strain AB307-0294).